A 106-amino-acid polypeptide reads, in one-letter code: Insulin-2 (106 aa).

The first 23 residues, 1-23 (MALWMQCLPLVLVLLFSTPNTEA), serve as a signal peptide directing secretion. 3 disulfides stabilise this stretch: Cys-30–Cys-92, Cys-42–Cys-105, and Cys-91–Cys-96. Residues 56–83 (DIEQAQVNGPQDNELDGMQFQPQEYQKM) constitute a propeptide, c peptide.

Belongs to the insulin family. In terms of assembly, heterodimer of a B chain and an A chain linked by two disulfide bonds.

The protein resides in the secreted. In terms of biological role, insulin decreases blood glucose concentration. It increases cell permeability to monosaccharides, amino acids and fatty acids. It accelerates glycolysis, the pentose phosphate cycle, and glycogen synthesis in liver. This chain is Insulin-2 (ins-b), found in Xenopus laevis (African clawed frog).